The following is a 559-amino-acid chain: Chaperonin GroEL 3 (559 aa).

ATP is bound by residues 88-92 (DGTTT), G426, and D507.

This sequence belongs to the chaperonin (HSP60) family. As to quaternary structure, forms a cylinder of 14 subunits composed of two heptameric rings stacked back-to-back. Interacts with the co-chaperonin GroES.

The protein resides in the cytoplasm. It catalyses the reaction ATP + H2O + a folded polypeptide = ADP + phosphate + an unfolded polypeptide.. Functionally, together with its co-chaperonin GroES, plays an essential role in assisting protein folding. The GroEL-GroES system forms a nano-cage that allows encapsulation of the non-native substrate proteins and provides a physical environment optimized to promote and accelerate protein folding. In Methylococcus capsulatus (strain ATCC 33009 / NCIMB 11132 / Bath), this protein is Chaperonin GroEL 3.